The sequence spans 897 residues: Interleukin enhancer-binding factor 3-A (897 aa).

Residues 5 to 379 (RIFLNDDRHV…PLKRPIEEDG (375 aa)) enclose the DZF domain. 3 disordered regions span residues 52–85 (QEKD…GENP), 364–403 (TTYA…PPQV), and 466–502 (MGLP…EVDS). Composition is skewed to basic and acidic residues over residues 72–81 (EEGKDSEMKT) and 373–384 (RPIEEDGDDKSP). A Bipartite nuclear localization signal motif is present at residues 372 to 390 (KRPIEEDGDDKSPSKKKKK). 2 DRBM domains span residues 399–468 (EPPQ…DMGL) and 521–587 (HGKN…KLFP). Disordered regions lie at residues 627–650 (PPPQ…GRGG) and 708–797 (GDSY…AQGA). The span at 637–650 (RGGMNRGRGRGRGG) shows a compositional bias: gly residues. Positions 714–747 (PTPPKPFVNKKPPPPQQQQQQQPPPQHASNPPKP) are enriched in pro residues. Residues 749–794 (YNQGYQGHQGGQQQQQQQQQQQTYNQNQYSNYGPPQKQKGGYNQGA) are compositionally biased toward low complexity.

As to quaternary structure, a component of a ybx2/frgy2-containing mRNA-ribonucleoprotein (mRNP) complex. Also a component of the CCAAT box transcription factor (CBTF) complex. In terms of processing, phosphorylated. Phosphorylation affects nuclear translocation. Methylated by protein arginine N-methyltransferase 1 (prmt1b) in the RGG-rich domain. Methylation decreases DNA-binding and thereby decreases transcription of the gata2 gene, but does not regulate dsRNA binding or subcellular localization. In terms of tissue distribution, expressed mainly in the ectoderm (at protein level).

Its subcellular location is the nucleus. It is found in the cytoplasm. In terms of biological role, RNA-binding protein that plays an essential role in the biogenesis of circular RNAs (circRNAs) which are produced by back-splicing circularization of pre-mRNAs. Within the nucleus, promotes circRNAs processing by stabilizing the regulatory elements residing in the flanking introns of the circularized exons. Plays thereby a role in the back-splicing of a subset of circRNAs. As a consequence, participates in a wide range of transcriptional and post-transcriptional processes. Binds to poly-U elements and AU-rich elements (AREs) in the 3'-UTR of target mRNAs. Upon viral infection, ILF3 accumulates in the cytoplasm and participates in the innate antiviral response. Mechanistically, ILF3 becomes phosphorylated and activated by the double-stranded RNA-activated protein kinase/PKR which releases ILF3 from cellular mature circRNAs. In turn, unbound ILF3 molecules are able to interact with and thus inhibit viral mRNAs. Has a cytoplasmic role early in development as part of a ribonucleoprotein (mRNP) complex which may regulate mRNA transport and/or translation. Following nuclear localization at the mid-blastula transition, acts as a transcription factor and binds the 5'-CCAAT-3' promoter sequence to regulate transcription of the gata2 gene as a subunit of the CCAAT box transcription factor (CBTF). Its role as an mRNP component negatively regulates its activity as a transcription factor by precluding its nuclear localization. This Xenopus laevis (African clawed frog) protein is Interleukin enhancer-binding factor 3-A (ilf3-a).